The following is a 192-amino-acid chain: Glycerol-3-phosphate acyltransferase (192 aa).

A run of 5 helical transmembrane segments spans residues 4-24, 48-68, 74-94, 101-121, and 125-145; these read FAIIYMLFTYLLGSISSDVVI, LVLVVFLCDVLKGMLPVWVGY, YFELGMVALAACLGHIFPIFF, GVATAFGAIAPIAWGVAGSML, and LLIFLFSGYVALSTVVTALIL.

It belongs to the PlsY family. In terms of assembly, probably interacts with PlsX.

The protein localises to the cell inner membrane. It catalyses the reaction an acyl phosphate + sn-glycerol 3-phosphate = a 1-acyl-sn-glycero-3-phosphate + phosphate. It functions in the pathway lipid metabolism; phospholipid metabolism. Catalyzes the transfer of an acyl group from acyl-phosphate (acyl-PO(4)) to glycerol-3-phosphate (G3P) to form lysophosphatidic acid (LPA). This enzyme utilizes acyl-phosphate as fatty acyl donor, but not acyl-CoA or acyl-ACP. The polypeptide is Glycerol-3-phosphate acyltransferase (Histophilus somni (strain 129Pt) (Haemophilus somnus)).